The primary structure comprises 432 residues: Transcriptional adapter 3 (432 aa).

A coiled-coil region spans residues 40 to 69 (IEELDTLQLELETLLSSASRRLRVLEAETQ). Disordered regions lie at residues 88-127 (KEHELGTPIKHSKPKKQKLDGKGSHASGPGPGRPKSRNMQ) and 275-313 (SPVEDSPIPEISGKESGTDGASTSPRSQNKPFSAPHTKS). Residues 293–305 (DGASTSPRSQNKP) show a composition bias toward polar residues. A coiled-coil region spans residues 367-407 (LLRLAKEEMNRQELRQRVRMADNEVMDAFRKIMAARQKKRT).

Belongs to the NGG1 family.

The protein localises to the nucleus. In terms of biological role, functions as a component of the PCAF complex. The PCAF complex is capable of efficiently acetylating histones in a nucleosomal context. This is Transcriptional adapter 3 (tada3) from Xenopus tropicalis (Western clawed frog).